A 230-amino-acid chain; its full sequence is Orotidine 5'-phosphate decarboxylase (230 aa).

Substrate-binding positions include D10, K31, 58 to 67, T117, R179, Q188, G208, and R209; that span reads DLKLHDIPNT. The active-site Proton donor is the K60. A disordered region spans residues 177–196; the sequence is GIRPKDASSDDQKRITTPED. A compositionally biased stretch (basic and acidic residues) spans 179–196; the sequence is RPKDASSDDQKRITTPED.

The protein belongs to the OMP decarboxylase family. Type 1 subfamily. Homodimer.

It catalyses the reaction orotidine 5'-phosphate + H(+) = UMP + CO2. The protein operates within pyrimidine metabolism; UMP biosynthesis via de novo pathway; UMP from orotate: step 2/2. Functionally, catalyzes the decarboxylation of orotidine 5'-monophosphate (OMP) to uridine 5'-monophosphate (UMP). This is Orotidine 5'-phosphate decarboxylase from Staphylococcus saprophyticus subsp. saprophyticus (strain ATCC 15305 / DSM 20229 / NCIMB 8711 / NCTC 7292 / S-41).